The chain runs to 522 residues: Cytochrome P450 4F4 (522 aa).

Transmembrane regions (helical) follow at residues Thr-15–Leu-35 and Gly-87–Ile-107. Heme contacts are provided by Glu-328 and Cys-468.

It belongs to the cytochrome P450 family. Heme serves as cofactor. As to expression, expressed in hepatocytes. High expression in liver and kidney. Lower expression in brain.

Its subcellular location is the endoplasmic reticulum membrane. The protein resides in the microsome membrane. The enzyme catalyses (5Z,8Z,11Z,14Z)-eicosatetraenoate + reduced [NADPH--hemoprotein reductase] + O2 = 20-hydroxy-(5Z,8Z,11Z,14Z)-eicosatetraenoate + oxidized [NADPH--hemoprotein reductase] + H2O + H(+). The catalysed reaction is leukotriene B4 + reduced [NADPH--hemoprotein reductase] + O2 = 20-hydroxy-leukotriene B4 + oxidized [NADPH--hemoprotein reductase] + H2O + H(+). It catalyses the reaction 6-trans-leukotriene B4 + reduced [NADPH--hemoprotein reductase] + O2 = 20-hydroxy-6-trans-leukotriene B4 + oxidized [NADPH--hemoprotein reductase] + H2O + H(+). It carries out the reaction prostaglandin A1 + reduced [NADPH--hemoprotein reductase] + O2 = 20-hydroxy prostaglandin A1 + oxidized [NADPH--hemoprotein reductase] + H2O + H(+). The enzyme catalyses prostaglandin E1 + reduced [NADPH--hemoprotein reductase] + O2 = 20-hydroxy prostaglandin E1 + oxidized [NADPH--hemoprotein reductase] + H2O + H(+). Functionally, a cytochrome P450 monooxygenase involved in the metabolism of arachidonic acid and its oxygenated derivatives. Mechanistically, uses molecular oxygen inserting one oxygen atom into a substrate, and reducing the second into a water molecule, with two electrons provided by NADPH via cytochrome P450 reductase (CPR; NADPH-ferrihemoprotein reductase). Participates in the conversion of arachidonic acid to omega-hydroxyeicosatetraenoic acid (20-HETE), a signaling molecule acting both as vasoconstrictive and natriuretic with overall effect on arterial blood pressure. Hydroxylates the terminal carbon (omega-hydroxylation) of inflammatory lipid mediators, including prostaglandin (PG) A1, PGE1 and leukotriene B4 (LTB4), and may play a role in inactivation of these oxylipins during the resolution of inflammation. This is Cytochrome P450 4F4 from Rattus norvegicus (Rat).